The following is a 440-amino-acid chain: tRNA(Ile)-lysidine synthase (440 aa).

An ATP-binding site is contributed by 31–36 (SGGADS).

The protein belongs to the tRNA(Ile)-lysidine synthase family.

It localises to the cytoplasm. The enzyme catalyses cytidine(34) in tRNA(Ile2) + L-lysine + ATP = lysidine(34) in tRNA(Ile2) + AMP + diphosphate + H(+). Ligates lysine onto the cytidine present at position 34 of the AUA codon-specific tRNA(Ile) that contains the anticodon CAU, in an ATP-dependent manner. Cytidine is converted to lysidine, thus changing the amino acid specificity of the tRNA from methionine to isoleucine. This is tRNA(Ile)-lysidine synthase from Borreliella burgdorferi (strain ATCC 35210 / DSM 4680 / CIP 102532 / B31) (Borrelia burgdorferi).